A 314-amino-acid chain; its full sequence is uncharacterized protein (314 aa).

A signal peptide spans 1 to 18 (MLIQILFLIILTLNCSYS). Residues Asn-68, Asn-72, Asn-106, and Asn-256 are each glycosylated (N-linked (GlcNAc...) asparagine).

Its subcellular location is the secreted. This is an uncharacterized protein from Caenorhabditis elegans.